Here is a 401-residue protein sequence, read N- to C-terminus: Glycerol-3-phosphate dehydrogenase [NAD(+)] 1 (401 aa).

NAD(+) contacts are provided by residues 40–45, Phe128, Lys151, and Ala184; that span reads GSGNWG. Lys151 provides a ligand contact to substrate. Lys244 (proton acceptor) is an active-site residue. NAD(+) contacts are provided by Arg309 and Gln338. Substrate is bound at residue 309–310; sequence RN.

Belongs to the NAD-dependent glycerol-3-phosphate dehydrogenase family.

The protein resides in the cytoplasm. The enzyme catalyses sn-glycerol 3-phosphate + NAD(+) = dihydroxyacetone phosphate + NADH + H(+). The sequence is that of Glycerol-3-phosphate dehydrogenase [NAD(+)] 1 (GPD1) from Zygosaccharomyces rouxii.